The sequence spans 491 residues: Protein OrfX3 (491 aa).

The protein belongs to the TULIP P47 family. In terms of assembly, heterodimer of OrfX1 and OrfX3; crystallizes as a dimer of heterodimers.

Functionally, expression of the ptox operon (ntnh-orfX1-orfX2-orfX3-pmp1) in B.thuringiensis kills Anopheles but not Aedes mosquito 3rd instar larvae. The ntnh-pmp1 construct is about half as toxic. This is Protein OrfX3 from Paraclostridium bifermentans (Clostridium bifermentans).